Reading from the N-terminus, the 418-residue chain is Putative methylthiotransferase jhp_0270 (418 aa).

In terms of domain architecture, MTTase N-terminal spans 2–110; sequence KKVYFKTFGC…INALLQEKKR (109 aa). The [4Fe-4S] cluster site is built by cysteine 11, cysteine 45, cysteine 74, cysteine 144, cysteine 148, and cysteine 151. A Radical SAM core domain is found at 130 to 355; it reads FVGKTRAFIK…KDLIFHKNKA (226 aa).

It belongs to the methylthiotransferase family. It depends on [4Fe-4S] cluster as a cofactor.

The polypeptide is Putative methylthiotransferase jhp_0270 (Helicobacter pylori (strain J99 / ATCC 700824) (Campylobacter pylori J99)).